Reading from the N-terminus, the 564-residue chain is Serine/threonine-protein kinase DBF20 (564 aa).

A Phosphoserine modification is found at S17. The tract at residues 24–62 (LNIPKPTSPQAQYRPARKSENGRLTPGLPRSYKPCDSDD) is disordered. The Protein kinase domain occupies 169-469 (FQILTQVGQG…FEQVRKMSYF (301 aa)). ATP contacts are provided by residues 175–183 (VGQGGYGQV) and K198. The Proton acceptor role is filled by D292. S366 carries the phosphoserine modification. Residues 470–547 (AEINFETLRT…RHRDGKQGSS (78 aa)) form the AGC-kinase C-terminal domain. A Phosphothreonine modification is found at T536.

It belongs to the protein kinase superfamily. Ser/Thr protein kinase family.

The enzyme catalyses L-seryl-[protein] + ATP = O-phospho-L-seryl-[protein] + ADP + H(+). The catalysed reaction is L-threonyl-[protein] + ATP = O-phospho-L-threonyl-[protein] + ADP + H(+). Is probably a Ser/Thr-protein kinase that may function in initiation of DNA synthesis and also in late nuclear division. This chain is Serine/threonine-protein kinase DBF20 (DBF20), found in Saccharomyces cerevisiae (strain ATCC 204508 / S288c) (Baker's yeast).